Here is a 198-residue protein sequence, read N- to C-terminus: Nucleoid occlusion factor SlmA (198 aa).

The 62-residue stretch at 9-70 (RNRREEILQA…SLIEFIEDSL (62 aa)) folds into the HTH tetR-type domain. Positions 33 to 52 (TTAKLAANVGVSEAALYRHF) form a DNA-binding region, H-T-H motif. The stretch at 119–144 (DRLQGRINQLFERIEVQLRQVLREKK) forms a coiled coil.

This sequence belongs to the nucleoid occlusion factor SlmA family. Homodimer. Interacts with FtsZ.

The protein localises to the cytoplasm. The protein resides in the nucleoid. Functionally, required for nucleoid occlusion (NO) phenomenon, which prevents Z-ring formation and cell division over the nucleoid. Acts as a DNA-associated cell division inhibitor that binds simultaneously chromosomal DNA and FtsZ, and disrupts the assembly of FtsZ polymers. SlmA-DNA-binding sequences (SBS) are dispersed on non-Ter regions of the chromosome, preventing FtsZ polymerization at these regions. In Yersinia enterocolitica serotype O:8 / biotype 1B (strain NCTC 13174 / 8081), this protein is Nucleoid occlusion factor SlmA.